Here is a 239-residue protein sequence, read N- to C-terminus: Aspartate/glutamate leucyltransferase (239 aa).

It belongs to the R-transferase family. Bpt subfamily.

The protein resides in the cytoplasm. The catalysed reaction is N-terminal L-glutamyl-[protein] + L-leucyl-tRNA(Leu) = N-terminal L-leucyl-L-glutamyl-[protein] + tRNA(Leu) + H(+). The enzyme catalyses N-terminal L-aspartyl-[protein] + L-leucyl-tRNA(Leu) = N-terminal L-leucyl-L-aspartyl-[protein] + tRNA(Leu) + H(+). Its function is as follows. Functions in the N-end rule pathway of protein degradation where it conjugates Leu from its aminoacyl-tRNA to the N-termini of proteins containing an N-terminal aspartate or glutamate. In Campylobacter jejuni subsp. jejuni serotype O:6 (strain 81116 / NCTC 11828), this protein is Aspartate/glutamate leucyltransferase.